The primary structure comprises 197 residues: dTTP/UTP pyrophosphatase (197 aa).

The Proton acceptor role is filled by aspartate 70.

This sequence belongs to the Maf family. YhdE subfamily. Requires a divalent metal cation as cofactor.

The protein resides in the cytoplasm. The catalysed reaction is dTTP + H2O = dTMP + diphosphate + H(+). The enzyme catalyses UTP + H2O = UMP + diphosphate + H(+). In terms of biological role, nucleoside triphosphate pyrophosphatase that hydrolyzes dTTP and UTP. May have a dual role in cell division arrest and in preventing the incorporation of modified nucleotides into cellular nucleic acids. The sequence is that of dTTP/UTP pyrophosphatase (yceF2) from Salmonella choleraesuis (strain SC-B67).